The chain runs to 290 residues: Enoyl-CoA hydratase, mitochondrial (290 aa).

The transit peptide at 1-27 directs the protein to the mitochondrion; it reads MATLRVLLSCVRGPLRPPVRCPAWRPF. Phosphothreonine is present on Thr-46. Position 98–101 (98–101) interacts with substrate; that stretch reads ADIK. Residue Lys-101 is modified to N6-acetyllysine; alternate. Lys-101 carries the N6-succinyllysine; alternate modification. Ser-114 is subject to Phosphoserine. Lys-115 carries the post-translational modification N6-acetyllysine; alternate. At Lys-115 the chain carries N6-succinyllysine; alternate. Lys-118 bears the N6-acetyllysine mark. Gly-141 is a binding site for substrate. At Lys-204 the chain carries N6-succinyllysine. N6-acetyllysine is present on Lys-211.

This sequence belongs to the enoyl-CoA hydratase/isomerase family. In terms of assembly, homohexamer; dimer of trimers.

The protein localises to the mitochondrion matrix. The catalysed reaction is a (3S)-3-hydroxyacyl-CoA = a (2E)-enoyl-CoA + H2O. It catalyses the reaction a (3E)-enoyl-CoA = a 4-saturated (2E)-enoyl-CoA. The enzyme catalyses (3E)-hexenoyl-CoA = (2E)-hexenoyl-CoA. It carries out the reaction (3S)-3-hydroxybutanoyl-CoA = (2E)-butenoyl-CoA + H2O. The catalysed reaction is 3-hydroxyisovaleryl-CoA = 3-methylbut-2-enoyl-CoA + H2O. It catalyses the reaction 3-hydroxypropanoyl-CoA = acryloyl-CoA + H2O. The enzyme catalyses 3-hydroxybutanoyl-CoA = (2E)-butenoyl-CoA + H2O. It carries out the reaction 2-methylpropenoyl-CoA + H2O = (S)-3-hydroxyisobutanoyl-CoA. The catalysed reaction is (3S)-hydroxyhexanoyl-CoA = (2E)-hexenoyl-CoA + H2O. It catalyses the reaction (3S)-hydroxydecanoyl-CoA = (2E)-decenoyl-CoA + H2O. The protein operates within lipid metabolism; fatty acid beta-oxidation. In terms of biological role, converts unsaturated trans-2-enoyl-CoA species ((2E)-enoyl-CoA) to the corresponding (3S)-3-hydroxyacyl-CoA species through addition of a water molecule to the double bond. Catalyzes the hydration of medium- and short-chained fatty enoyl-CoA thioesters from 4 carbons long (C4) up to C16. Has high substrate specificity for crotonyl-CoA ((2E)-butenoyl-CoA) and moderate specificity for acryloyl-CoA, 3-methylcrotonyl-CoA (3-methyl-(2E)-butenoyl-CoA) and methacrylyl-CoA ((2E)-2-methylpropenoyl-CoA). Can bind tiglyl-CoA (2-methylcrotonoyl-CoA), but hydrates only a small amount of this substrate. Plays a key role in the beta-oxidation spiral of short- and medium-chain fatty acid oxidation. At a lower rate than the hydratase reaction, catalyzes the isomerase reaction of trans-3-enoyl-CoA species (such as (3E)-hexenoyl-CoA) to trans-2-enoyl-CoA species (such as (2E)-hexenoyl-CoA), which are subsequently hydrated to 3(S)-3-hydroxyacyl-CoA species (such as (3S)-hydroxyhexanoyl-CoA). The protein is Enoyl-CoA hydratase, mitochondrial (ECHS1) of Pongo abelii (Sumatran orangutan).